The chain runs to 417 residues: Histidine--tRNA ligase (417 aa).

The protein belongs to the class-II aminoacyl-tRNA synthetase family. In terms of assembly, homodimer.

It is found in the cytoplasm. The enzyme catalyses tRNA(His) + L-histidine + ATP = L-histidyl-tRNA(His) + AMP + diphosphate + H(+). The sequence is that of Histidine--tRNA ligase from Nitratidesulfovibrio vulgaris (strain DP4) (Desulfovibrio vulgaris).